A 231-amino-acid polypeptide reads, in one-letter code: Large ribosomal subunit protein uL1 (231 aa).

The protein belongs to the universal ribosomal protein uL1 family. Part of the 50S ribosomal subunit.

In terms of biological role, binds directly to 23S rRNA. The L1 stalk is quite mobile in the ribosome, and is involved in E site tRNA release. Functionally, protein L1 is also a translational repressor protein, it controls the translation of the L11 operon by binding to its mRNA. This Thioalkalivibrio sulfidiphilus (strain HL-EbGR7) protein is Large ribosomal subunit protein uL1.